A 242-amino-acid chain; its full sequence is Small ribosomal subunit protein uS2 (242 aa).

The protein belongs to the universal ribosomal protein uS2 family.

In Shewanella denitrificans (strain OS217 / ATCC BAA-1090 / DSM 15013), this protein is Small ribosomal subunit protein uS2.